The following is a 657-amino-acid chain: N-acetylgalactosaminyltransferase 7 (657 aa).

Residues 1-6 (MRLKIG) lie on the Cytoplasmic side of the membrane. A helical; Signal-anchor for type II membrane protein transmembrane segment spans residues 7-29 (FILRSLLVVGSFLGLVVLWSSLT). The Lumenal portion of the chain corresponds to 30 to 657 (PRPDDPSPLS…KWEMNNIHSV (628 aa)). The tract at residues 31–65 (RPDDPSPLSRMREDRDVNDPMPNRGGNGLAPGEDR) is disordered. Cystine bridges form between Cys197-Cys435, Cys426-Cys507, Cys545-Cys562, Cys585-Cys600, and Cys625-Cys640. The catalytic subdomain A stretch occupies residues 206 to 317 (LLTSSVVIVF…VNWYAPLVAP (112 aa)). Substrate contacts are provided by Asp247 and Arg277. 2 residues coordinate Mn(2+): Asp301 and His303. A catalytic subdomain B region spans residues 381 to 443 (PYRSPAMAGG…PCSRVGHIYR (63 aa)). Trp412 contributes to the substrate binding site. Position 440 (His440) interacts with Mn(2+). Position 443 (Arg443) interacts with substrate. The 121-residue stretch at 532-652 (VDWGEIRGFE…SKTTQKWEMN (121 aa)) folds into the Ricin B-type lectin domain.

The protein belongs to the glycosyltransferase 2 family. GalNAc-T subfamily. Requires Mn(2+) as cofactor. In terms of tissue distribution, widely expressed. Expressed in uterus, retina, kidney, small intestine, omentum, stomach and CNS.

It localises to the golgi apparatus membrane. The enzyme catalyses L-seryl-[protein] + UDP-N-acetyl-alpha-D-galactosamine = a 3-O-[N-acetyl-alpha-D-galactosaminyl]-L-seryl-[protein] + UDP + H(+). It catalyses the reaction L-threonyl-[protein] + UDP-N-acetyl-alpha-D-galactosamine = a 3-O-[N-acetyl-alpha-D-galactosaminyl]-L-threonyl-[protein] + UDP + H(+). It participates in protein modification; protein glycosylation. Its function is as follows. Glycopeptide transferase involved in O-linked oligosaccharide biosynthesis, which catalyzes the transfer of an N-acetyl-D-galactosamine residue to an already glycosylated peptide. In contrast to other proteins of the family, it does not act as a peptide transferase that transfers GalNAc onto serine or threonine residue on the protein receptor, but instead requires the prior addition of a GalNAc on a peptide before adding additional GalNAc moieties. Some peptide transferase activity is however not excluded, considering that its appropriate peptide substrate may remain unidentified. The sequence is that of N-acetylgalactosaminyltransferase 7 (GALNT7) from Homo sapiens (Human).